Here is a 426-residue protein sequence, read N- to C-terminus: Glutamate-1-semialdehyde 2,1-aminomutase (426 aa).

Lys-265 bears the N6-(pyridoxal phosphate)lysine mark.

The protein belongs to the class-III pyridoxal-phosphate-dependent aminotransferase family. HemL subfamily. In terms of assembly, homodimer. The cofactor is pyridoxal 5'-phosphate.

The protein localises to the cytoplasm. It catalyses the reaction (S)-4-amino-5-oxopentanoate = 5-aminolevulinate. Its pathway is porphyrin-containing compound metabolism; protoporphyrin-IX biosynthesis; 5-aminolevulinate from L-glutamyl-tRNA(Glu): step 2/2. The sequence is that of Glutamate-1-semialdehyde 2,1-aminomutase from Salmonella paratyphi A (strain ATCC 9150 / SARB42).